We begin with the raw amino-acid sequence, 421 residues long: Anthranilate synthase component 1 (421 aa).

Residues Ser-31 and 207–209 (PYM) each bind L-tryptophan. Position 242-243 (242-243 (GT)) interacts with chorismate. Glu-269 serves as a coordination point for Mg(2+). Residues Tyr-357, Arg-377, 391-393 (GAG), and Gly-393 contribute to the chorismate site. Glu-406 contacts Mg(2+).

The protein belongs to the anthranilate synthase component I family. As to quaternary structure, heterotetramer consisting of two non-identical subunits: a beta subunit (TrpG) and a large alpha subunit (TrpE). Mg(2+) serves as cofactor.

The catalysed reaction is chorismate + L-glutamine = anthranilate + pyruvate + L-glutamate + H(+). The protein operates within amino-acid biosynthesis; L-tryptophan biosynthesis; L-tryptophan from chorismate: step 1/5. Cooperatively feedback inhibited by tryptophan. Its function is as follows. Part of a heterotetrameric complex that catalyzes the two-step biosynthesis of anthranilate, an intermediate in the biosynthesis of L-tryptophan. In the first step, the glutamine-binding beta subunit (TrpG) of anthranilate synthase (AS) provides the glutamine amidotransferase activity which generates ammonia as a substrate that, along with chorismate, is used in the second step, catalyzed by the large alpha subunit of AS (TrpE) to produce anthranilate. In the absence of TrpG, TrpE can synthesize anthranilate directly from chorismate and high concentrations of ammonia. This Saccharolobus solfataricus (strain ATCC 35092 / DSM 1617 / JCM 11322 / P2) (Sulfolobus solfataricus) protein is Anthranilate synthase component 1 (trpE).